Consider the following 260-residue polypeptide: Vesicle-associated membrane protein/synaptobrevin-binding protein (260 aa).

At 1–238 the chain is on the cytoplasmic side; the sequence is MASHEQALIL…SPAPAAAVRA (238 aa). The 119-residue stretch at 7-125 folds into the MSP domain; sequence ALILEPAGEL…MDTKLRCVFE (119 aa). The tract at residues 127–177 is disordered; that stretch reads PDGSHQAPASDASRATDAGAHFSESALEDPTVASRKTETQSPKRVGAVGSA. A coiled-coil region spans residues 172–216; that stretch reads GAVGSAGEDVKKLQHELKKAQSEITSLKGENSQLKDEGIRLRKVA. The chain crosses the membrane as a helical; Anchor for type IV membrane protein span at residues 239-259; the sequence is FPPVVYVVAAIILGLIIGKFL.

It belongs to the VAMP-associated protein (VAP) (TC 9.B.17) family. In terms of tissue distribution, detected only in the central nervous system and the gill of aplysia.

The protein localises to the membrane. The protein resides in the synapse. Its subcellular location is the synaptosome. Functionally, required for neurotransmitter release. Interacts with VAMP. This is Vesicle-associated membrane protein/synaptobrevin-binding protein from Aplysia californica (California sea hare).